The sequence spans 203 residues: Small ribosomal subunit protein uS4 (203 aa).

In terms of domain architecture, S4 RNA-binding spans 93 to 156 (RRLDNVVYRL…AKVPAILEAV (64 aa)).

Belongs to the universal ribosomal protein uS4 family. In terms of assembly, part of the 30S ribosomal subunit. Contacts protein S5. The interaction surface between S4 and S5 is involved in control of translational fidelity.

Its function is as follows. One of the primary rRNA binding proteins, it binds directly to 16S rRNA where it nucleates assembly of the body of the 30S subunit. In terms of biological role, with S5 and S12 plays an important role in translational accuracy. The sequence is that of Small ribosomal subunit protein uS4 from Streptococcus mutans serotype c (strain ATCC 700610 / UA159).